The primary structure comprises 422 residues: Metallocarboxypeptidase A (422 aa).

A signal peptide spans 1–17 (MRSVLSFALLAANVVSA). Positions 18–112 (AVLAPFDYSG…FEAYSAGYAP (95 aa)) are cleaved as a propeptide — activation peptide. The Peptidase M14 domain maps to 119–419 (SYHSYQDHLS…AGTVAMLKAV (301 aa)). Zn(2+) contacts are provided by H179 and E182. Substrate is bound by residues 179–182 (HARE), R237, and 254–255 (NR). Residues C248 and C271 are joined by a disulfide bond. Zn(2+) is bound at residue H309. A substrate-binding site is contributed by 310–311 (SY). E385 functions as the Proton donor/acceptor in the catalytic mechanism.

It belongs to the peptidase M14 family. Zn(2+) is required as a cofactor.

It is found in the secreted. Functionally, extracellular metalloprotease that contributes to pathogenicity. This is Metallocarboxypeptidase A (MCPA) from Arthroderma otae (strain ATCC MYA-4605 / CBS 113480) (Microsporum canis).